A 72-amino-acid polypeptide reads, in one-letter code: Metallothionein-like protein type 2 (72 aa).

Belongs to the metallothionein superfamily. Type 15 family.

Its function is as follows. Metallothioneins have a high content of cysteine residues that bind various heavy metals. The protein is Metallothionein-like protein type 2 of Solanum lycopersicum (Tomato).